The sequence spans 314 residues: Olfactory receptor 1E1 (314 aa).

Topologically, residues 1-25 are extracellular; that stretch reads MMGQNQTSISDFLLLGLPIQPEQQN. The N-linked (GlcNAc...) asparagine glycan is linked to N5. The helical transmembrane segment at 26–49 threads the bilayer; sequence LCYALFLAMYLTTLLGNLLIIVLI. Over 50–57 the chain is Cytoplasmic; sequence RLDSHLHT. The chain crosses the membrane as a helical span at residues 58–79; it reads PMYLFLSNLSFSDLCFSSVTIP. Residues 80–100 lie on the Extracellular side of the membrane; sequence KLLQNMQNQDPSIPYADCLTQ. An intrachain disulfide couples C97 to C189. A helical transmembrane segment spans residues 101–120; that stretch reads MYFFLLFGDLESFLLVAMAY. At 121 to 139 the chain is on the cytoplasmic side; sequence DRYVAICFALHYTAIMSPM. A helical transmembrane segment spans residues 140-158; sequence LCLSLVALSWVLTTFHAML. Over 159-195 the chain is Extracellular; it reads HTLLMARLCFCADNVIPHFFCDMSALLKLACSDTRVN. Residues 196–219 traverse the membrane as a helical segment; it reads EWVIFIMGGLIVVIPFLLILGSYA. Residues 220 to 236 lie on the Cytoplasmic side of the membrane; the sequence is RIVSSILKVPSSKGICK. A helical transmembrane segment spans residues 237 to 259; sequence AFSTCGSHLSVVSLFYGTVIGLY. Residues 260 to 272 are Extracellular-facing; the sequence is LCPSANSSTLKET. Residues 273–292 form a helical membrane-spanning segment; it reads VMAMMYTVVTPMLNPFIYSL. Residues 293–314 lie on the Cytoplasmic side of the membrane; the sequence is RNGDMKGALSRVIHQKKTFFSL.

This sequence belongs to the G-protein coupled receptor 1 family.

It localises to the cell membrane. Its function is as follows. Odorant receptor. In Gorilla gorilla gorilla (Western lowland gorilla), this protein is Olfactory receptor 1E1 (OR1E1).